The sequence spans 108 residues: Large ribosomal subunit protein uL24 (108 aa).

Belongs to the universal ribosomal protein uL24 family. In terms of assembly, part of the 50S ribosomal subunit.

Its function is as follows. One of two assembly initiator proteins, it binds directly to the 5'-end of the 23S rRNA, where it nucleates assembly of the 50S subunit. One of the proteins that surrounds the polypeptide exit tunnel on the outside of the subunit. The chain is Large ribosomal subunit protein uL24 from Mycoplasmopsis pulmonis (strain UAB CTIP) (Mycoplasma pulmonis).